The chain runs to 210 residues: Thymidylate kinase (210 aa).

An ATP-binding site is contributed by 10 to 17; sequence GLEGAGKT.

It belongs to the thymidylate kinase family.

It catalyses the reaction dTMP + ATP = dTDP + ADP. In terms of biological role, phosphorylation of dTMP to form dTDP in both de novo and salvage pathways of dTTP synthesis. The polypeptide is Thymidylate kinase (Erwinia tasmaniensis (strain DSM 17950 / CFBP 7177 / CIP 109463 / NCPPB 4357 / Et1/99)).